A 672-amino-acid polypeptide reads, in one-letter code: MKTLKVLKIFIIVYISSVSLESFAGFGESCSNLPITSDGYLETYTAYGYIIRSIDMKDPRGNCNPSTSSITFCFKNVEGSASPCTIYTLNEGDTRKISDLSTDNNPDLGANTVLKNIVLTVKKFGNDLCLAMPTSRGPMPVACKSLSVTPTATKPKDENCNIGKSCYTGANYSQSLINFSGLAVQCLSETLNKIFFTGSSCSAQDQNSRITHLASFATFQGYLKRIIGAALILYTMFFAFNMALNKEYATTEKITLFIIKFLFVVYFSIGLGPLDFSGGQPVKENGMLKYGLPLLTGAAPDFAGMIFNAAGSRGLCQFDNTKYKDGYKFYGLWDAIDCRIGYYLGLDLLYNIDKNGILGRPVSNGTSGNNKPIPNFDPDGKKDRPHDLSKAGALRFFTVMFGFFMSGHVIILVAGMVFSVIFLSILLYFITHYLVCMVTIYVMTYISPIFIPMVLFTRTKAYFDGWLKVCISCALQPAVVAGFIALLITMYDSAIFKNCEFLRYDYEKGDIRFSTFELRLPSIDADKCQESFGYKMLKYYAGEGWEEHLLILFPIKSIVRDVVSILAELLCVLIFSVIFYYFSKSIGRFAADLTNGPNMDAVTASPTKIVDLVKKGAAFLKDASVHEHGKSSLGDKPDIGNKRKDGAQQGEDAVNSSGGEVADLASGSGGGK.

Residues 1–24 (MKTLKVLKIFIIVYISSVSLESFA) form the signal peptide. Transmembrane regions (helical) follow at residues 226–246 (IIGA…ALNK) and 254–274 (ITLF…LGPL). Positions 363 to 372 (SNGTSGNNKP) are enriched in polar residues. The segment at 363 to 384 (SNGTSGNNKPIPNFDPDGKKDR) is disordered. Helical transmembrane passes span 410–430 (IILV…LYFI), 436–456 (CMVT…MVLF), 469–489 (VCIS…LLIT), and 562–582 (VVSI…FYYF). Over residues 628 to 646 (HGKSSLGDKPDIGNKRKDG) the composition is skewed to basic and acidic residues. Residues 628–672 (HGKSSLGDKPDIGNKRKDGAQQGEDAVNSSGGEVADLASGSGGGK) are disordered.

The protein belongs to the TrbL/VirB6 family.

It localises to the cell membrane. This is an uncharacterized protein from Rickettsia prowazekii (strain Madrid E).